The sequence spans 475 residues: MSSLPKTDFNVPKYQLIAQKREANAAEIEAALEVVREFIIKKKLILYGGIAIDYALHLKGSSIYPEGERPDFDMFSPNHVEDAYELADLLYEKGFKQVGTVRAIHVQTMRVRTDFVWVADLSYMPSNIFDTIPTLTYKNLKIIHPDYQRAGLHLAFCFPFDNPPREDVFSRFKKDLQRYNLIEKYYPIPVVPVKSTYENKTFSIPFKRVAIHGFAAYALLYQTLNELRMTCKVPEWKTEFPQPSYSYHKNDKNITLTVDMPKAYPSLVLATYNPEEIIKEMGLHLTEICEPYMDYSPPIFKTKDIHFFSTMFKELAISMIQDNIIVVSPQYLLLYFLYGAFATPADKALFLFYYNATLWILEKADSLLNIIQKQTSPEEFMKFANTSPFVLTTRVLRCSQDRCTFSPAYRISLANDVQQSQLPLPKTHFLSNFLPDISTLPYNYYPGKGKDRPTNFSYEKNLLFNIGGKCTQLAM.

This sequence belongs to the poxviridae poly(A) polymerase catalytic subunit family. Highly divergent.

It localises to the virion. The enzyme catalyses RNA(n) + ATP = RNA(n)-3'-adenine ribonucleotide + diphosphate. Polymerase that creates the 3'-poly(A) tail of mRNA's. This Ornithodoros (relapsing fever ticks) protein is Putative poly(A) polymerase catalytic subunit.